Consider the following 283-residue polypeptide: MFS-type transporter eupM (283 aa).

7 consecutive transmembrane segments (helical) span residues 68–88, 111–131, 136–156, 165–185, 196–216, 227–247, and 263–283; these read LVAW…WGAM, IAWI…VAGP, GGFK…YMML, VLLA…TPMI, IGLA…VYPI, FAWT…IPII, and LIDL…ATMI.

Belongs to the major facilitator superfamily. Monocarboxylate porter (TC 2.A.1.13) family.

Its subcellular location is the membrane. Its function is as follows. MFS-type transporter; part of the gene cluster that mediates the biosynthesis of eupenifeldin, a bistropolone meroterpenoid that acts as an antitumor agent. The polypeptide is MFS-type transporter eupM (Phoma sp).